We begin with the raw amino-acid sequence, 478 residues long: ATP synthase subunit beta (478 aa).

158–165 (GGAGVGKT) lines the ATP pocket.

Belongs to the ATPase alpha/beta chains family. In terms of assembly, F-type ATPases have 2 components, CF(1) - the catalytic core - and CF(0) - the membrane proton channel. CF(1) has five subunits: alpha(3), beta(3), gamma(1), delta(1), epsilon(1). CF(0) has three main subunits: a(1), b(2) and c(9-12). The alpha and beta chains form an alternating ring which encloses part of the gamma chain. CF(1) is attached to CF(0) by a central stalk formed by the gamma and epsilon chains, while a peripheral stalk is formed by the delta and b chains.

It localises to the cell inner membrane. It catalyses the reaction ATP + H2O + 4 H(+)(in) = ADP + phosphate + 5 H(+)(out). Produces ATP from ADP in the presence of a proton gradient across the membrane. The catalytic sites are hosted primarily by the beta subunits. The sequence is that of ATP synthase subunit beta from Rhizobium johnstonii (strain DSM 114642 / LMG 32736 / 3841) (Rhizobium leguminosarum bv. viciae).